The chain runs to 112 residues: Iron-sulfur cluster insertion protein ErpA (112 aa).

Iron-sulfur cluster is bound by residues C40, C104, and C106.

The protein belongs to the HesB/IscA family. Homodimer. Iron-sulfur cluster serves as cofactor.

Its function is as follows. Required for insertion of 4Fe-4S clusters for at least IspG. In Pseudoalteromonas translucida (strain TAC 125), this protein is Iron-sulfur cluster insertion protein ErpA.